A 133-amino-acid polypeptide reads, in one-letter code: Small ribosomal subunit protein uS19 (133 aa).

The protein belongs to the universal ribosomal protein uS19 family.

Protein S19 forms a complex with S13 that binds strongly to the 16S ribosomal RNA. The chain is Small ribosomal subunit protein uS19 from Thermococcus sibiricus (strain DSM 12597 / MM 739).